The chain runs to 101 residues: Acylphosphatase (101 aa).

Residues arginine 15–tyrosine 101 form the Acylphosphatase-like domain. Active-site residues include arginine 30 and asparagine 48.

This sequence belongs to the acylphosphatase family.

The enzyme catalyses an acyl phosphate + H2O = a carboxylate + phosphate + H(+). The chain is Acylphosphatase (acyP) from Saccharolobus solfataricus (strain ATCC 35092 / DSM 1617 / JCM 11322 / P2) (Sulfolobus solfataricus).